The sequence spans 887 residues: MEAFSVRFESASSIEERKEQTRNARAEVLRQAKHNFEKEQRGEERKRLRDEDTWMLPDVHERIEQFSQEHSEKKKKKKDKHSKKVKKEKKKKRKKQKCQKQSESTDSSASSEDEWVEAAPSQISDKEKTWKVKDKRTEEECDSHDIQRDEWMTIDFMSIKTVSSSSLKAEKETLRQIEREKTQVLEQSKLLERELNPYWKDGGTGLPSKTCILPVTKAKGVEDGGLSWLRKSCQRMKEQAQKENRNFEDIVAEKYGSMEIFQSKLKEAEKIAYKKEDCGWERWRKPTYSDRAQCSQASGTSDLVKCKNLSEDRHLEMEPANSSNYKFSGPDTGKRSGTLQTCRRESALRKNQDSSGNLRSKFLRPSDEDELSFHKRKNFESSSSYSPLVAQASLHCDFRKLTENSEESSASCSRSDRRQENRKPSDKKPLETWSYNANQHSTGGRREQLQAESMSCDPPGRGLQQDMTLTIAGPEAESTYILNVDEKNKLGAKIIKAEMMGNMELAEQLKAQLKEANKFKETQMPAKRLGVEHEDEQEVILIQTDKSGRMWPVSSPRETLDMKAERRKRKRVSTHEDKERVRYFPDDDHLSLKDLVKNEKIGTDINQNRLFMKMASKFMGKSDEDNYTLDDMFVSKAAEKEHLGKKEESQRRRAIAEHQSLAAKMAKCLYCFDSSQFPKHLIVAIGVKVYLCLPSFQSLTEGHCFIVPLQHHQAATVLDEDVWEEIQMFRKSLVKMFEDKELDCIFLETNMGLKKHYHMVYECIPLPKEVGDMAPIYFKKAIMESDEEWSMNKKLIDLSSKDIRKSVPRGLPYFAVDFGLQGGFAHIIEDQYRFPHYFGKEIIGGMLDLEPRLWRKGIRESFEDQRKKSLQFAQWWKPYDITKSKSS.

Positions 1-143 (MEAFSVRFES…DKRTEEECDS (143 aa)) are disordered. A coiled-coil region spans residues 11 to 103 (ASSIEERKEQ…KKQKCQKQSE (93 aa)). The span at 14-72 (IEERKEQTRNARAEVLRQAKHNFEKEQRGEERKRLRDEDTWMLPDVHERIEQFSQEHSE) shows a compositional bias: basic and acidic residues. Position 71 is a phosphoserine (Ser71). Over residues 73 to 98 (KKKKKKDKHSKKVKKEKKKKRKKQKC) the composition is skewed to basic residues. The span at 99–110 (QKQSESTDSSAS) shows a compositional bias: low complexity. A compositionally biased stretch (basic and acidic residues) spans 124–143 (SDKEKTWKVKDKRTEEECDS). Residues 164 to 254 (SSSLKAEKET…RNFEDIVAEK (91 aa)) are a coiled coil. Residue Lys168 forms a Glycyl lysine isopeptide (Lys-Gly) (interchain with G-Cter in SUMO2) linkage. 2 disordered regions span residues 315-370 (LEME…DEDE) and 405-447 (SEES…GRRE). Over residues 342 to 352 (CRRESALRKNQ) the composition is skewed to basic and acidic residues. Phosphoserine is present on residues Ser354 and Ser366. A compositionally biased stretch (basic and acidic residues) spans 414–430 (RSDRRQENRKPSDKKPL). The span at 433 to 442 (WSYNANQHST) shows a compositional bias: polar residues. At Ser478 the chain carries Phosphoserine. A coiled-coil region spans residues 495 to 524 (IKAEMMGNMELAEQLKAQLKEANKFKETQM). A Glycyl lysine isopeptide (Lys-Gly) (interchain with G-Cter in SUMO2) cross-link involves residue Lys597. The residue at position 622 (Ser622) is a Phosphoserine.

It belongs to the CWF19 family.

This is CWF19-like protein 2 (Cwf19l2) from Mus musculus (Mouse).